The sequence spans 228 residues: MRSGVIAQKVGMTRVYNDAGEHIPVTVLRLENCQVVSHRTEEKNGYTAVQLGAGRSKVKNTPKAMRGHFAAASVEPKAKLVEFRVSADNLIDIGAELTAGHFVAGQLVDVTGTTIGKGFAGAIKRHNFGGLRATHGVSVSHRSHGSTGSNQDPGRVWKGKRMAGHMGQTRVTTQNLEVVSTDEDRGLILVKGAVPGSKGSWIVVRDAIKSGTPEGAPRPAAVRAAESK.

An N5-methylglutamine modification is found at Q151.

It belongs to the universal ribosomal protein uL3 family. Part of the 50S ribosomal subunit. Forms a cluster with proteins L14 and L19. Post-translationally, methylated by PrmB.

Functionally, one of the primary rRNA binding proteins, it binds directly near the 3'-end of the 23S rRNA, where it nucleates assembly of the 50S subunit. The protein is Large ribosomal subunit protein uL3 of Rhizobium meliloti (strain 1021) (Ensifer meliloti).